We begin with the raw amino-acid sequence, 369 residues long: MVKASVPCMNSGDKETSYGTCSLPQEIVLPKARPILEDTIKDMFSNVSSTDCIKVADLGCSSGPNTFMAISIVVDTFHEMCQQAQLKTSPEFQVFLNDLPENDFNNIFRSVASFTDRIKKGKGDKFGLCFVTGVPGSFYGRLFPNRSLHLVHSSYSVNWLSKACISFHVPDGIGNNKGSVYMAESSPPNVFKAHSRQFKEDFSTFLKLRSQEMIPGGRMVLTFNGRSNLYPSKQDDDWKLQLAKSLYDLVVEGIVKEADADSFNIPMYAPYKGELCEIIQKEDSFDLDKLEVVQINWGPRDVLTNEDFEFDKYQRGQKTANSVRAITEPMLASHFGEDILDKLFTGLAKYEAERLGYKLTSIVVSMKKK.

The S-adenosyl-L-homocysteine site is built by Tyr18, Cys60, Asn65, Asp98, Leu99, Ser137, and Phe138. Asn176, Asp261, Phe263, and Asn264 together coordinate Mg(2+).

The protein belongs to the methyltransferase superfamily. Type-7 methyltransferase family. Requires Mg(2+) as cofactor.

This chain is Probable methyltransferase TCM_000331, found in Theobroma cacao (Cacao).